The primary structure comprises 714 residues: Fatty acid oxidation complex subunit alpha (714 aa).

An enoyl-CoA hydratase region spans residues methionine 1–proline 190. Residues alanine 306–glutamine 714 form a 3-hydroxyacyl-CoA dehydrogenase region.

In the N-terminal section; belongs to the enoyl-CoA hydratase/isomerase family. The protein in the central section; belongs to the 3-hydroxyacyl-CoA dehydrogenase family. Heterotetramer of two alpha chains (FadJ) and two beta chains (FadI).

The protein resides in the cytoplasm. It carries out the reaction a (3S)-3-hydroxyacyl-CoA = a (2E)-enoyl-CoA + H2O. The enzyme catalyses a 4-saturated-(3S)-3-hydroxyacyl-CoA = a (3E)-enoyl-CoA + H2O. The catalysed reaction is a (3S)-3-hydroxyacyl-CoA + NAD(+) = a 3-oxoacyl-CoA + NADH + H(+). It catalyses the reaction (3S)-3-hydroxybutanoyl-CoA = (3R)-3-hydroxybutanoyl-CoA. It participates in lipid metabolism; fatty acid beta-oxidation. Functionally, catalyzes the formation of a hydroxyacyl-CoA by addition of water on enoyl-CoA. Also exhibits 3-hydroxyacyl-CoA epimerase and 3-hydroxyacyl-CoA dehydrogenase activities. This chain is Fatty acid oxidation complex subunit alpha, found in Shigella flexneri.